The following is a 590-amino-acid chain: V-type ATP synthase alpha chain (590 aa).

Position 232–239 (232–239) interacts with ATP; that stretch reads GPFGSGKT.

Belongs to the ATPase alpha/beta chains family.

It catalyses the reaction ATP + H2O + 4 H(+)(in) = ADP + phosphate + 5 H(+)(out). Its function is as follows. Produces ATP from ADP in the presence of a proton gradient across the membrane. The V-type alpha chain is a catalytic subunit. The polypeptide is V-type ATP synthase alpha chain (Thermoanaerobacter pseudethanolicus (strain ATCC 33223 / 39E) (Clostridium thermohydrosulfuricum)).